The sequence spans 441 residues: Probable carboxypeptidase NFIA_052450 (441 aa).

The first 16 residues, 1 to 16 (MKPLSSLLLSAALSAA), serve as a signal peptide directing secretion. Asn88 and Asn150 each carry an N-linked (GlcNAc...) asparagine glycan. A Zn(2+)-binding site is contributed by Asp166. Glu198 serves as the catalytic Proton acceptor. Glu199 serves as a coordination point for Zn(2+). Asn354 and Asn373 each carry an N-linked (GlcNAc...) asparagine glycan.

This sequence belongs to the peptidase M20A family. Zn(2+) serves as cofactor.

It localises to the secreted. This is Probable carboxypeptidase NFIA_052450 from Neosartorya fischeri (strain ATCC 1020 / DSM 3700 / CBS 544.65 / FGSC A1164 / JCM 1740 / NRRL 181 / WB 181) (Aspergillus fischerianus).